The primary structure comprises 119 residues: MPTQHTFSRELRLLTPEHFKRVFAEPVRAASPQITLLACPNTLEHPRLGLAVPKKALKRAVWRNRVKRVVRESFRLNQANLPAIDIVVIAKAGVKEMDNEELFKLLEKLWRTLSRRCNG.

Belongs to the RnpA family. Consists of a catalytic RNA component (M1 or rnpB) and a protein subunit.

The catalysed reaction is Endonucleolytic cleavage of RNA, removing 5'-extranucleotides from tRNA precursor.. RNaseP catalyzes the removal of the 5'-leader sequence from pre-tRNA to produce the mature 5'-terminus. It can also cleave other RNA substrates such as 4.5S RNA. The protein component plays an auxiliary but essential role in vivo by binding to the 5'-leader sequence and broadening the substrate specificity of the ribozyme. This is Ribonuclease P protein component from Aeromonas hydrophila subsp. hydrophila (strain ATCC 7966 / DSM 30187 / BCRC 13018 / CCUG 14551 / JCM 1027 / KCTC 2358 / NCIMB 9240 / NCTC 8049).